The chain runs to 100 residues: MLVMNLQLFAHKKGVGSSKNGRDSEAKRLGVKCSDGQFVLAGNILVRQRGTKIHPGLNVGRGGDDTLFAKIDGVVKYERLGRDKKKASVYPVEVEEVVAE.

A propeptide spanning residues 1–9 is cleaved from the precursor; that stretch reads MLVMNLQLF.

This sequence belongs to the bacterial ribosomal protein bL27 family. The N-terminus is cleaved by ribosomal processing cysteine protease Prp.

In Clostridium botulinum (strain Hall / ATCC 3502 / NCTC 13319 / Type A), this protein is Large ribosomal subunit protein bL27.